We begin with the raw amino-acid sequence, 158 residues long: NAD(P)H-quinone oxidoreductase subunit J, chloroplastic (158 aa).

This sequence belongs to the complex I 30 kDa subunit family. As to quaternary structure, NDH is composed of at least 16 different subunits, 5 of which are encoded in the nucleus.

It localises to the plastid. The protein localises to the chloroplast thylakoid membrane. The enzyme catalyses a plastoquinone + NADH + (n+1) H(+)(in) = a plastoquinol + NAD(+) + n H(+)(out). It carries out the reaction a plastoquinone + NADPH + (n+1) H(+)(in) = a plastoquinol + NADP(+) + n H(+)(out). NDH shuttles electrons from NAD(P)H:plastoquinone, via FMN and iron-sulfur (Fe-S) centers, to quinones in the photosynthetic chain and possibly in a chloroplast respiratory chain. The immediate electron acceptor for the enzyme in this species is believed to be plastoquinone. Couples the redox reaction to proton translocation, and thus conserves the redox energy in a proton gradient. The chain is NAD(P)H-quinone oxidoreductase subunit J, chloroplastic from Draba nemorosa (Woodland whitlowgrass).